Here is a 310-residue protein sequence, read N- to C-terminus: Methionyl-tRNA formyltransferase (310 aa).

111–114 lines the (6S)-5,6,7,8-tetrahydrofolate pocket; that stretch reads SLLP.

The protein belongs to the Fmt family.

It catalyses the reaction L-methionyl-tRNA(fMet) + (6R)-10-formyltetrahydrofolate = N-formyl-L-methionyl-tRNA(fMet) + (6S)-5,6,7,8-tetrahydrofolate + H(+). In terms of biological role, attaches a formyl group to the free amino group of methionyl-tRNA(fMet). The formyl group appears to play a dual role in the initiator identity of N-formylmethionyl-tRNA by promoting its recognition by IF2 and preventing the misappropriation of this tRNA by the elongation apparatus. This chain is Methionyl-tRNA formyltransferase, found in Rhodopseudomonas palustris (strain ATCC BAA-98 / CGA009).